The sequence spans 488 residues: BRAP2 RING ZnF UBP domain-containing protein 1 (488 aa).

The RING-type; degenerate zinc-finger motif lies at 174-214; the sequence is CPICLERLDPDTSGIVSTLCDHSFQCSCTSKWTYLSCQVCR. The segment at 208–301 adopts a UBP-type; degenerate zinc-finger fold; that stretch reads LSCQVCRLCQ…GKSVEMSTSC (94 aa). Residues Cys-225, Cys-228, Cys-237, Cys-240, Cys-245, His-252, His-256, and His-262 each contribute to the Zn(2+) site. The stretch at 370 to 418 forms a coiled coil; it reads EQIVVNTMQELQNKIEKCEEEKSGITEVNTKLIKEQDTWRKKAKEIEER. Residues 453–488 form a disordered region; the sequence is MSSDTDGIREGTVLPVPISPEPVSSVRRQKKSNRRK. Over residues 465–478 the composition is skewed to low complexity; that stretch reads VLPVPISPEPVSSV. Basic residues predominate over residues 479–488; the sequence is RRQKKSNRRK.

Component of the heteromeric E3 ligase complex made of BRIZ1 and BRIZ2. Forms heterooligomers with BRIZ2 via coiled-coil domains.

The enzyme catalyses S-ubiquitinyl-[E2 ubiquitin-conjugating enzyme]-L-cysteine + [acceptor protein]-L-lysine = [E2 ubiquitin-conjugating enzyme]-L-cysteine + N(6)-ubiquitinyl-[acceptor protein]-L-lysine.. Its pathway is protein modification; protein ubiquitination. Functionally, RING-type ubiquitin E3 ligase required for seed germination and post-germination growth. This Arabidopsis thaliana (Mouse-ear cress) protein is BRAP2 RING ZnF UBP domain-containing protein 1.